The primary structure comprises 87 residues: DNA-directed RNA polymerase subunit omega (87 aa).

The protein belongs to the RNA polymerase subunit omega family. The RNAP catalytic core consists of 2 alpha, 1 beta, 1 beta' and 1 omega subunit. When a sigma factor is associated with the core the holoenzyme is formed, which can initiate transcription.

It catalyses the reaction RNA(n) + a ribonucleoside 5'-triphosphate = RNA(n+1) + diphosphate. Functionally, promotes RNA polymerase assembly. Latches the N- and C-terminal regions of the beta' subunit thereby facilitating its interaction with the beta and alpha subunits. The protein is DNA-directed RNA polymerase subunit omega of Leifsonia xyli subsp. xyli (strain CTCB07).